A 90-amino-acid polypeptide reads, in one-letter code: Conotoxin Im6.2 (90 aa).

The signal sequence occupies residues 1–18; it reads MKLTILLLVAALLVLTQA. Residues 19–29 constitute a propeptide that is removed on maturation; sequence RTERRRVKSRK. 3 disulfides stabilise this stretch: Cys-61–Cys-75, Cys-68–Cys-79, and Cys-74–Cys-84. At Glu-89 the chain carries Glutamic acid 1-amide.

It belongs to the conotoxin O2 superfamily. As to expression, expressed by the venom duct.

Its subcellular location is the secreted. Its function is as follows. Probable neurotoxin. The chain is Conotoxin Im6.2 from Conus imperialis (Imperial cone).